Reading from the N-terminus, the 126-residue chain is uncharacterized protein (126 aa).

The N-terminal stretch at 1 to 24 is a signal peptide; that stretch reads MKMTKLATLFLTATLSLASGAALA. Residues 27 to 47 are compositionally biased toward low complexity; it reads SGAQTNNGQANAAADAGQVAP. A disordered region spans residues 27–126; the sequence is SGAQTNNGQA…VDTKTDGTTQ (100 aa). Polar residues predominate over residues 54–64; that stretch reads APNNVDNNGVN. 2 stretches are compositionally biased toward basic and acidic residues: residues 84–105 and 117–126; these read MTKDEEHKNTMCKDGRCPDINK and VDTKTDGTTQ.

This is an uncharacterized protein from Shigella flexneri.